The following is a 178-amino-acid chain: Crossover junction endodeoxyribonuclease RuvC (178 aa).

Residues D18, E78, and D150 contribute to the active site. D18, E78, and D150 together coordinate Mg(2+).

Belongs to the RuvC family. In terms of assembly, homodimer which binds Holliday junction (HJ) DNA. The HJ becomes 2-fold symmetrical on binding to RuvC with unstacked arms; it has a different conformation from HJ DNA in complex with RuvA. In the full resolvosome a probable DNA-RuvA(4)-RuvB(12)-RuvC(2) complex forms which resolves the HJ. It depends on Mg(2+) as a cofactor.

It localises to the cytoplasm. It catalyses the reaction Endonucleolytic cleavage at a junction such as a reciprocal single-stranded crossover between two homologous DNA duplexes (Holliday junction).. Its function is as follows. The RuvA-RuvB-RuvC complex processes Holliday junction (HJ) DNA during genetic recombination and DNA repair. Endonuclease that resolves HJ intermediates. Cleaves cruciform DNA by making single-stranded nicks across the HJ at symmetrical positions within the homologous arms, yielding a 5'-phosphate and a 3'-hydroxyl group; requires a central core of homology in the junction. The consensus cleavage sequence is 5'-(A/T)TT(C/G)-3'. Cleavage occurs on the 3'-side of the TT dinucleotide at the point of strand exchange. HJ branch migration catalyzed by RuvA-RuvB allows RuvC to scan DNA until it finds its consensus sequence, where it cleaves and resolves the cruciform DNA. This Granulibacter bethesdensis (strain ATCC BAA-1260 / CGDNIH1) protein is Crossover junction endodeoxyribonuclease RuvC.